The following is a 514-amino-acid chain: 2,3-bisphosphoglycerate-independent phosphoglycerate mutase (514 aa).

Residues D14 and S64 each contribute to the Mn(2+) site. The active-site Phosphoserine intermediate is S64. Residues H125, 155 to 156 (RD), R187, R193, 263 to 266 (RADR), and K336 contribute to the substrate site. 5 residues coordinate Mn(2+): D403, H407, D444, H445, and H463.

Belongs to the BPG-independent phosphoglycerate mutase family. In terms of assembly, monomer. The cofactor is Mn(2+).

The catalysed reaction is (2R)-2-phosphoglycerate = (2R)-3-phosphoglycerate. It functions in the pathway carbohydrate degradation; glycolysis; pyruvate from D-glyceraldehyde 3-phosphate: step 3/5. Catalyzes the interconversion of 2-phosphoglycerate and 3-phosphoglycerate. In Shigella flexneri, this protein is 2,3-bisphosphoglycerate-independent phosphoglycerate mutase.